Reading from the N-terminus, the 310-residue chain is tRNA dimethylallyltransferase (310 aa).

ATP is bound at residue 9–16; it reads GPTAVGKT. Position 11–16 (11–16) interacts with substrate; that stretch reads TAVGKT. Positions 34–37 are interaction with substrate tRNA; sequence DSMQ.

Belongs to the IPP transferase family. Monomer. It depends on Mg(2+) as a cofactor.

It catalyses the reaction adenosine(37) in tRNA + dimethylallyl diphosphate = N(6)-dimethylallyladenosine(37) in tRNA + diphosphate. In terms of biological role, catalyzes the transfer of a dimethylallyl group onto the adenine at position 37 in tRNAs that read codons beginning with uridine, leading to the formation of N6-(dimethylallyl)adenosine (i(6)A). The protein is tRNA dimethylallyltransferase of Syntrophomonas wolfei subsp. wolfei (strain DSM 2245B / Goettingen).